The following is a 476-amino-acid chain: Bifunctional protein HldE (476 aa).

Residues methionine 1–serine 319 are ribokinase. Asparagine 195–glutamate 198 serves as a coordination point for ATP. Aspartate 264 is a catalytic residue. Residues methionine 345 to glutamine 476 are cytidylyltransferase.

In the N-terminal section; belongs to the carbohydrate kinase PfkB family. It in the C-terminal section; belongs to the cytidylyltransferase family. As to quaternary structure, homodimer.

The catalysed reaction is D-glycero-beta-D-manno-heptose 7-phosphate + ATP = D-glycero-beta-D-manno-heptose 1,7-bisphosphate + ADP + H(+). It catalyses the reaction D-glycero-beta-D-manno-heptose 1-phosphate + ATP + H(+) = ADP-D-glycero-beta-D-manno-heptose + diphosphate. It participates in nucleotide-sugar biosynthesis; ADP-L-glycero-beta-D-manno-heptose biosynthesis; ADP-L-glycero-beta-D-manno-heptose from D-glycero-beta-D-manno-heptose 7-phosphate: step 1/4. It functions in the pathway nucleotide-sugar biosynthesis; ADP-L-glycero-beta-D-manno-heptose biosynthesis; ADP-L-glycero-beta-D-manno-heptose from D-glycero-beta-D-manno-heptose 7-phosphate: step 3/4. Its function is as follows. Catalyzes the phosphorylation of D-glycero-D-manno-heptose 7-phosphate at the C-1 position to selectively form D-glycero-beta-D-manno-heptose-1,7-bisphosphate. In terms of biological role, catalyzes the ADP transfer from ATP to D-glycero-beta-D-manno-heptose 1-phosphate, yielding ADP-D-glycero-beta-D-manno-heptose. This chain is Bifunctional protein HldE, found in Shewanella sp. (strain W3-18-1).